Reading from the N-terminus, the 481-residue chain is Proline--tRNA ligase (481 aa).

Belongs to the class-II aminoacyl-tRNA synthetase family. ProS type 3 subfamily. In terms of assembly, homodimer.

The protein localises to the cytoplasm. It catalyses the reaction tRNA(Pro) + L-proline + ATP = L-prolyl-tRNA(Pro) + AMP + diphosphate. Its function is as follows. Catalyzes the attachment of proline to tRNA(Pro) in a two-step reaction: proline is first activated by ATP to form Pro-AMP and then transferred to the acceptor end of tRNA(Pro). This Chlorobium phaeobacteroides (strain BS1) protein is Proline--tRNA ligase.